We begin with the raw amino-acid sequence, 1486 residues long: Chromosome partition protein MukB (1486 aa).

34 to 41 lines the ATP pocket; it reads GGNGAGKS. 3 coiled-coil regions span residues 326 to 418, 444 to 480, and 509 to 603; these read LEAD…QYNQ, LETF…QAYQ, and RHLA…RAPV. The flexible hinge stretch occupies residues 666-783; the sequence is PGGSEDQRLN…EVPLFGRAAR (118 aa). 3 coiled-coil regions span residues 835–923, 977–1115, and 1209–1266; these read EAEI…AKLE, EMLS…TAKA, and VEAI…QNVS.

This sequence belongs to the SMC family. MukB subfamily. In terms of assembly, homodimerization via its hinge domain. Binds to DNA via its C-terminal region. Interacts, and probably forms a ternary complex, with MukE and MukF via its C-terminal region. The complex formation is stimulated by calcium or magnesium. Interacts with tubulin-related protein FtsZ.

The protein localises to the cytoplasm. It is found in the nucleoid. Its function is as follows. Plays a central role in chromosome condensation, segregation and cell cycle progression. Functions as a homodimer, which is essential for chromosome partition. Involved in negative DNA supercoiling in vivo, and by this means organize and compact chromosomes. May achieve or facilitate chromosome segregation by condensation DNA from both sides of a centrally located replisome during cell division. This Escherichia coli O81 (strain ED1a) protein is Chromosome partition protein MukB.